The following is a 253-amino-acid chain: Maleate isomerase (253 aa).

Residues Asn14, 80–82 (CLV), Tyr137, and Asn167 contribute to the substrate site. The active-site Nucleophile is Cys80. An S-(2-succinyl)cysteine modification is found at Cys80. Cys198 serves as the catalytic Proton donor. Position 199–200 (199–200 (VQ)) interacts with substrate.

The protein belongs to the maleate isomerase family. In terms of assembly, homodimer.

The enzyme catalyses maleate = fumarate. Its function is as follows. Catalyzes cis-trans isomerization of the C2-C3 double bond in maleate to yield fumarate. In Alcaligenes faecalis, this protein is Maleate isomerase.